A 317-amino-acid chain; its full sequence is uncharacterized protein (317 aa).

A helical transmembrane segment spans residues 11-31 (ALLLVIFGSLIVSFAIFFMVL). PASTA domains lie at 33–100 (NNEI…FISK), 101–174 (GAII…LISK), and 180–241 (DKHV…TIAK).

It localises to the membrane. This is an uncharacterized protein from Borreliella burgdorferi (strain ATCC 35210 / DSM 4680 / CIP 102532 / B31) (Borrelia burgdorferi).